A 521-amino-acid polypeptide reads, in one-letter code: Lymphocyte activation gene 3 protein (521 aa).

The signal sequence occupies residues 1–23 (MREDLLLGFLLLGLLWEAPVVSS). At 24–442 (GPGKELPVVW…ISGDLKGGHL (419 aa)) the chain is on the extracellular side. In terms of domain architecture, Ig-like V-type spans 37 to 163 (GAPVHLPCSL…LSCSLRLRVG (127 aa)). An interaction with FGL1 region spans residues 37 to 246 (GAPVHLPCSL…LTYRDGFNVS (210 aa)). A disulfide bridge connects residues Cys-44 and Cys-156. Ig-like C2-type domains lie at 165–246 (ASMI…FNVS), 258–341 (PVAP…ATVT), and 345–412 (ITVT…EGQR). N-linked (GlcNAc...) asparagine glycosylation is present at Asn-184. Cys-185 and Cys-235 are joined by a disulfide. Residues Asn-244, Asn-309, Asn-337, and Asn-381 are each glycosylated (N-linked (GlcNAc...) asparagine). An intrachain disulfide couples Cys-276 to Cys-327. Cys-363 and Cys-405 are oxidised to a cystine. The segment at 422 to 442 (ESSSGAHSARRISGDLKGGHL) is connecting peptide. Residues 443-463 (VLVLILGALSLFLLVAGAFGF) traverse the membrane as a helical segment. Residues 464 to 521 (HWWRKQLLLRRFSALEHGIQPFPAQRKIEELERELETEMGQEPEPEPEPQLEPEPRQL) lie on the Cytoplasmic side of the membrane. A KIEELE motif motif is present at residues 490 to 495 (KIEELE). Positions 493–518 (ELERELETEMGQEPEPEPEPQLEPEP) are 13 X 2 AA tandem repeats of E-X. Positions 493-521 (ELERELETEMGQEPEPEPEPQLEPEPRQL) are disordered. Positions 500–514 (TEMGQEPEPEPEPQL) are enriched in acidic residues.

Belongs to the LAG3 family. In terms of assembly, interacts with MHC class II (MHC-II); selectively recognizes stable complexes of peptide and MHC-II. Interacts with FGL1 (via the Fibrinogen C-terminal domain). Proteolytically cleaved by ADAM10 and ADAM17 within the connecting peptide region, leading to release of Secreted lymphocyte activation gene 3 protein (sLAG-3). ADAM10 mediates constitutive cleavage, but cleavage increases following T-cell activation, whereas shedding by ADAM17 is induced by TCR signaling in a PRKCQ-dependent manner. In terms of tissue distribution, primarily expressed in activated CD4(+) and CD8(+) T-cells. Also expressed in a subset of regulatory T-cells (Tregs), such as natural CD4(+)CD25(+) Tregs. Also expressed on plasmacytoid dendritic cells (pDCs).

The protein localises to the cell membrane. The protein resides in the secreted. Functionally, lymphocyte activation gene 3 protein: Inhibitory receptor on antigen activated T-cells. Delivers inhibitory signals upon binding to ligands, such as FGL1. FGL1 constitutes a major ligand of LAG3 and is responsible for LAG3 T-cell inhibitory function. Following TCR engagement, LAG3 associates with CD3-TCR in the immunological synapse and directly inhibits T-cell activation. May inhibit antigen-specific T-cell activation in synergy with PDCD1/PD-1, possibly by acting as a coreceptor for PDCD1/PD-1. Negatively regulates the proliferation, activation, effector function and homeostasis of both CD8(+) and CD4(+) T-cells. Also mediates immune tolerance: constitutively expressed on a subset of regulatory T-cells (Tregs) and contributes to their suppressive function. Also acts as a negative regulator of plasmacytoid dendritic cell (pDCs) activation. Binds MHC class II (MHC-II); the precise role of MHC-II-binding is however unclear. Its function is as follows. May function as a ligand for MHC class II (MHC-II) on antigen-presenting cells (APC), promoting APC activation/maturation and driving Th1 immune response. In Mus musculus (Mouse), this protein is Lymphocyte activation gene 3 protein.